We begin with the raw amino-acid sequence, 347 residues long: P2Y purinoceptor 12 (347 aa).

Topologically, residues 1-33 (MDVPGVNTTSANTTFSPGTSTLCVRDYKITQVL) are extracellular. 2 N-linked (GlcNAc...) asparagine glycosylation sites follow: N7 and N12. Cystine bridges form between C23–C276 and C103–C181. The chain crosses the membrane as a helical span at residues 34–56 (FPLLYTVLFFAGLITNSLAMRIF). The Cytoplasmic portion of the chain corresponds to 57–67 (FQIRSKSNFII). S61 and S63 each carry phosphoserine. The helical transmembrane segment at 68-88 (FLKNTVISDLLMILTFPFKIL) threads the bilayer. Residues 89–103 (SDAKLGAGPLRTLVC) lie on the Extracellular side of the membrane. Residues R99, C103, and Y111 each contribute to the ADP site. Residues 104–124 (QVTSVTFYFTMYISISFLGLI) traverse the membrane as a helical segment. Residues 125–148 (TIDRYLKTTRPFKTSSPSNLLGAK) are Cytoplasmic-facing. Residues 149–168 (ILSVVIWAFMFLISLPNMIL) traverse the membrane as a helical segment. ADP-binding positions include 162 to 165 (SLPN), 181 to 185 (CSFLK), H193, and N197. Over 169–191 (TNRRPKDKDVTKCSFLKSEFGLV) the chain is Extracellular. The helical transmembrane segment at 192–213 (WHEIVNYICQVIFWINFLIVIV) threads the bilayer. Over 214 to 239 (CYSLITKELYRSYVRTRGSAKVPKKK) the chain is Cytoplasmic. The helical transmembrane segment at 240–265 (VNVKVFIIIAVFFICFVPFHFARIPY) threads the bilayer. Residues 262-265 (RIPY), Q269, and K286 each bind ADP. The Extracellular segment spans residues 266-284 (TLSQTRAVFDCSAENTLFY). A helical membrane pass occupies residues 285-304 (VKESTLWLTSLNACLDPFIY). The Cytoplasmic portion of the chain corresponds to 305 to 347 (FFLCKSFRNSLTSMLRCSNSTSTSGTNKKKGQEGGEPSEETPM). Residues 321–347 (CSNSTSTSGTNKKKGQEGGEPSEETPM) form a disordered region.

This sequence belongs to the G-protein coupled receptor 1 family.

The protein localises to the cell membrane. Its function is as follows. Receptor for ADP and ATP coupled to G-proteins that inhibit the adenylyl cyclase second messenger system. Required for normal platelet aggregation and blood coagulation. This is P2Y purinoceptor 12 (P2ry12) from Mus musculus (Mouse).